The sequence spans 201 residues: Recombination protein RecR (201 aa).

Residues 59–74 (CSRCQNFCEAELCSIC) form a C4-type zinc finger. The region spanning 82-177 (RVLCVVESPT…PVSRIAHGIP (96 aa)) is the Toprim domain.

Belongs to the RecR family.

In terms of biological role, may play a role in DNA repair. It seems to be involved in an RecBC-independent recombinational process of DNA repair. It may act with RecF and RecO. This Hahella chejuensis (strain KCTC 2396) protein is Recombination protein RecR.